The sequence spans 289 residues: Transcriptional regulator Rob (289 aa).

The HTH araC/xylS-type domain maps to 8-106 (RDLLIWLEGH…SQTPALYRRS (99 aa)). DNA-binding regions (H-T-H motif) lie at residues 25–46 (DNVAAKAGYSKWHLQRMFKDVT) and 73–96 (ILDIALQYRFDSQQTFTRAFKKQF).

In terms of biological role, transcriptional regulator. Represses transcription of genes belonging to the flagellar regulon, including flhD, flhB and fliC; probably thereby leading to repression of motility. Binds to regulatory regions of target genes, including the promoters of the flhDC operon and of P-type ATPase mgtA. Involved in post-transcriptional regulation of expression. Represses expression of the flhDC operon in a post-transcriptional manner. Binds to the right arm of the replication origin oriC of the chromosome. Rob binding may influence the formation of the nucleoprotein structure, required for oriC function in the initiation of replication. The protein is Transcriptional regulator Rob of Salmonella typhimurium (strain LT2 / SGSC1412 / ATCC 700720).